Here is a 724-residue protein sequence, read N- to C-terminus: Probable protein phosphatase 2C 62 (724 aa).

The tract at residues Asp-357–Asn-385 is disordered. Residues Ala-365–Ala-374 are compositionally biased toward basic and acidic residues. Residues Asp-482–Val-719 form the PPM-type phosphatase domain. The Mn(2+) site is built by Asp-514, Gly-515, Asp-643, and Asp-710.

Belongs to the PP2C family. Requires Mg(2+) as cofactor. It depends on Mn(2+) as a cofactor.

The catalysed reaction is O-phospho-L-seryl-[protein] + H2O = L-seryl-[protein] + phosphate. It carries out the reaction O-phospho-L-threonyl-[protein] + H2O = L-threonyl-[protein] + phosphate. In Arabidopsis thaliana (Mouse-ear cress), this protein is Probable protein phosphatase 2C 62.